Consider the following 910-residue polypeptide: Eukaryotic translation initiation factor 3 subunit C (910 aa).

The interval 1-21 (MSRFFANGSESESESSEEEIQ) is disordered. Positions 11–20 (SESESSEEEI) are enriched in acidic residues. 4 positions are modified to phosphoserine: Ser34, Ser165, Ser176, and Ser185. The tract at residues 157 to 279 (FREAPDQESE…IRKRAEDDED (123 aa)) is disordered. Over residues 162–186 (DQESEAEDEVVALESDGGDAGDDSD) the composition is skewed to acidic residues. The segment covering 194–207 (AVPKAVKSAPAKAA) has biased composition (low complexity). Positions 209 to 235 (ADDDDSDDSIDWDSDSESETESSDDEN) are enriched in acidic residues. Positions 240–268 (MRERFLKRTTEKEEKDDDKRKDKRKEQKT) are enriched in basic and acidic residues. Residues 639-815 (FHMHINLELL…ETVGMHRSEP (177 aa)) form the PCI domain. The tract at residues 847–910 (FFQRGNMGNR…QQQVQTIDEE (64 aa)) is disordered. The segment covering 862–874 (NRNQNNQGGNWLG) has biased composition (low complexity). Residues 882–891 (RNRNQRGHHK) are compositionally biased toward basic residues. Residues 895-910 (DRQQQQQQQVQTIDEE) show a composition bias toward low complexity.

Belongs to the eIF-3 subunit C family. Component of the eukaryotic translation initiation factor 3 (eIF-3) complex. The eIF-3 complex interacts with pix.

Its subcellular location is the cytoplasm. Functionally, component of the eukaryotic translation initiation factor 3 (eIF-3) complex, which is involved in protein synthesis of a specialized repertoire of mRNAs and, together with other initiation factors, stimulates binding of mRNA and methionyl-tRNAi to the 40S ribosome. The eIF-3 complex specifically targets and initiates translation of a subset of mRNAs involved in cell proliferation. This Drosophila melanogaster (Fruit fly) protein is Eukaryotic translation initiation factor 3 subunit C.